The primary structure comprises 514 residues: ATP synthase subunit alpha (514 aa).

170–177 provides a ligand contact to ATP; that stretch reads GDRQTGKT.

This sequence belongs to the ATPase alpha/beta chains family. In terms of assembly, F-type ATPases have 2 components, CF(1) - the catalytic core - and CF(0) - the membrane proton channel. CF(1) has five subunits: alpha(3), beta(3), gamma(1), delta(1), epsilon(1). CF(0) has three main subunits: a(1), b(2) and c(9-12). The alpha and beta chains form an alternating ring which encloses part of the gamma chain. CF(1) is attached to CF(0) by a central stalk formed by the gamma and epsilon chains, while a peripheral stalk is formed by the delta and b chains.

It localises to the cell inner membrane. It carries out the reaction ATP + H2O + 4 H(+)(in) = ADP + phosphate + 5 H(+)(out). In terms of biological role, produces ATP from ADP in the presence of a proton gradient across the membrane. The alpha chain is a regulatory subunit. In Psychrobacter sp. (strain PRwf-1), this protein is ATP synthase subunit alpha.